A 92-amino-acid chain; its full sequence is Small ribosomal subunit protein uS19 (92 aa).

The protein belongs to the universal ribosomal protein uS19 family.

Protein S19 forms a complex with S13 that binds strongly to the 16S ribosomal RNA. The polypeptide is Small ribosomal subunit protein uS19 (Acholeplasma laidlawii (strain PG-8A)).